Consider the following 314-residue polypeptide: Porphobilinogen deaminase (314 aa).

C243 bears the S-(dipyrrolylmethanemethyl)cysteine mark.

This sequence belongs to the HMBS family. Monomer. Requires dipyrromethane as cofactor.

It carries out the reaction 4 porphobilinogen + H2O = hydroxymethylbilane + 4 NH4(+). It participates in porphyrin-containing compound metabolism; protoporphyrin-IX biosynthesis; coproporphyrinogen-III from 5-aminolevulinate: step 2/4. Functionally, tetrapolymerization of the monopyrrole PBG into the hydroxymethylbilane pre-uroporphyrinogen in several discrete steps. In Bordetella bronchiseptica (strain ATCC BAA-588 / NCTC 13252 / RB50) (Alcaligenes bronchisepticus), this protein is Porphobilinogen deaminase.